The following is a 436-amino-acid chain: 3-ketoacyl-CoA thiolase (436 aa).

C99 serves as the catalytic Acyl-thioester intermediate. Catalysis depends on proton acceptor residues H392 and C422.

The protein belongs to the thiolase-like superfamily. Thiolase family. As to quaternary structure, heterotetramer of two alpha chains (FadJ) and two beta chains (FadI).

The protein localises to the cytoplasm. The catalysed reaction is an acyl-CoA + acetyl-CoA = a 3-oxoacyl-CoA + CoA. It functions in the pathway lipid metabolism; fatty acid beta-oxidation. Catalyzes the final step of fatty acid oxidation in which acetyl-CoA is released and the CoA ester of a fatty acid two carbons shorter is formed. This Shewanella baltica (strain OS155 / ATCC BAA-1091) protein is 3-ketoacyl-CoA thiolase.